A 461-amino-acid polypeptide reads, in one-letter code: Cysteine--tRNA ligase (461 aa).

Residue Cys-30 coordinates Zn(2+). Residues 32-42 carry the 'HIGH' region motif; the sequence is VTIYDLCHIGH. 3 residues coordinate Zn(2+): Cys-211, His-236, and Glu-240. Positions 268 to 272 match the 'KMSKS' region motif; it reads KMSKS. Position 271 (Lys-271) interacts with ATP.

It belongs to the class-I aminoacyl-tRNA synthetase family. Monomer. Requires Zn(2+) as cofactor.

Its subcellular location is the cytoplasm. It catalyses the reaction tRNA(Cys) + L-cysteine + ATP = L-cysteinyl-tRNA(Cys) + AMP + diphosphate. The chain is Cysteine--tRNA ligase from Shewanella sp. (strain W3-18-1).